We begin with the raw amino-acid sequence, 379 residues long: Neutral protease 2 homolog TRV_03208 (379 aa).

Residues 1 to 19 form the signal peptide; the sequence is MKFFTALAAVGALLAPALA. The propeptide occupies 20-187; sequence LPTPASEEAS…DYFSKSLDKR (168 aa). Cystine bridges form between C193/C263 and C270/C288. Residue N221 is glycosylated (N-linked (GlcNAc...) asparagine). H312 contributes to the Zn(2+) binding site. E313 is a catalytic residue. Residues H316 and D327 each contribute to the Zn(2+) site.

The protein belongs to the peptidase M35 family. It depends on Zn(2+) as a cofactor.

The protein localises to the secreted. It carries out the reaction Preferential cleavage of bonds with hydrophobic residues in P1'. Also 3-Asn-|-Gln-4 and 8-Gly-|-Ser-9 bonds in insulin B chain.. Functionally, secreted metalloproteinase that allows assimilation of proteinaceous substrates. Shows high activities on basic nuclear substrates such as histone and protamine. May be involved in virulence. The polypeptide is Neutral protease 2 homolog TRV_03208 (Trichophyton verrucosum (strain HKI 0517)).